A 239-amino-acid polypeptide reads, in one-letter code: 1-(5-phosphoribosyl)-5-[(5-phosphoribosylamino)methylideneamino] imidazole-4-carboxamide isomerase (239 aa).

Catalysis depends on Asp-8, which acts as the Proton acceptor. Residue Asp-129 is the Proton donor of the active site.

It belongs to the HisA/HisF family.

The protein resides in the cytoplasm. The catalysed reaction is 1-(5-phospho-beta-D-ribosyl)-5-[(5-phospho-beta-D-ribosylamino)methylideneamino]imidazole-4-carboxamide = 5-[(5-phospho-1-deoxy-D-ribulos-1-ylimino)methylamino]-1-(5-phospho-beta-D-ribosyl)imidazole-4-carboxamide. It functions in the pathway amino-acid biosynthesis; L-histidine biosynthesis; L-histidine from 5-phospho-alpha-D-ribose 1-diphosphate: step 4/9. The sequence is that of 1-(5-phosphoribosyl)-5-[(5-phosphoribosylamino)methylideneamino] imidazole-4-carboxamide isomerase from Bacillus cereus (strain AH820).